We begin with the raw amino-acid sequence, 284 residues long: Acetylglutamate kinase (284 aa).

Substrate-binding positions include 64 to 65 (GG), Arg86, and Asn177.

This sequence belongs to the acetylglutamate kinase family. ArgB subfamily.

It is found in the cytoplasm. It carries out the reaction N-acetyl-L-glutamate + ATP = N-acetyl-L-glutamyl 5-phosphate + ADP. Its pathway is amino-acid biosynthesis; L-arginine biosynthesis; N(2)-acetyl-L-ornithine from L-glutamate: step 2/4. Catalyzes the ATP-dependent phosphorylation of N-acetyl-L-glutamate. This Haemophilus ducreyi (strain 35000HP / ATCC 700724) protein is Acetylglutamate kinase.